The sequence spans 706 residues: Kinesin-like protein KIP2 (706 aa).

2 stretches are compositionally biased toward low complexity: residues 1–28 (MIQKMSPSLRRPSTRSSSGSSNIPQSPS) and 36–63 (SNLTRNSIRSTSNSGSQSISASSTRSNS). The tract at residues 1–139 (MIQKMSPSLR…QPRSNSHHGS (139 aa)) is disordered. Residues 102-493 (SITVTIRPKP…LRFASRAKNV (392 aa)) form the Kinesin motor domain. The span at 127–139 (RYSQPRSNSHHGS) shows a compositional bias: polar residues. 202–209 (GMTGSGKT) contacts ATP. Residues 413 to 445 (VGSNIPSPSASGSSSSSGNATNNGTSPSNHIPY) are disordered. Residues 414-441 (GSNIPSPSASGSSSSSGNATNNGTSPSN) are compositionally biased toward low complexity. Coiled coils occupy residues 507 to 541 (NNDGDKDRTIELLRRQLEEQRRMISELKNRSNIGE), 569 to 589 (MRAENRVLKYKLENCEKLLDK), and 612 to 689 (TLLE…RALK).

Belongs to the TRAFAC class myosin-kinesin ATPase superfamily. Kinesin family. As to quaternary structure, might be dimeric.

The protein resides in the cytoplasm. It localises to the cytoskeleton. Its function is as follows. Required for assembly of the mitotic spindle. This is Kinesin-like protein KIP2 (KIP2) from Saccharomyces cerevisiae (strain ATCC 204508 / S288c) (Baker's yeast).